The sequence spans 177 residues: Transcriptional regulator MET31 (177 aa).

A C2H2-type zinc finger spans residues 95-117; it reads YSCAKCQLKFSRSSDLRRHEKVH.

Interacts with MET4 and MET28.

Its subcellular location is the cytoplasm. The protein localises to the nucleus. In terms of biological role, auxiliary transcriptional regulator of sulfur amino acid metabolism. Involved in the transcriptional activation of MET28. This is Transcriptional regulator MET31 (MET31) from Saccharomyces cerevisiae (strain ATCC 204508 / S288c) (Baker's yeast).